A 592-amino-acid chain; its full sequence is V-type ATP synthase alpha chain (592 aa).

232 to 239 (GPFGAGKT) is an ATP binding site.

The protein belongs to the ATPase alpha/beta chains family.

It catalyses the reaction ATP + H2O + 4 H(+)(in) = ADP + phosphate + 5 H(+)(out). In terms of biological role, produces ATP from ADP in the presence of a proton gradient across the membrane. The V-type alpha chain is a catalytic subunit. This is V-type ATP synthase alpha chain from Clostridium botulinum (strain Eklund 17B / Type B).